The sequence spans 193 residues: HMG-Y-related protein A (193 aa).

An H15 domain is found at 11–81 (PIPPYPEMIL…LKNNYFRAGA (71 aa)). The interval 75–193 (NYFRAGAPDA…PAVPSETAAA (119 aa)) is disordered. The short motif at 86–92 (PKRGRGR) is the Nuclear localization signal 1 (NLS) element. 4 consecutive DNA-binding regions (a.T hook) follow at residues 87 to 98 (KRGRGRPPKARD), 113 to 124 (GRGRGRPPKAKS), 138 to 149 (PKPRGRPPKKAK), and 173 to 184 (KRGRGRPPKVRP). The short motif at 145–149 (PKKAK) is the Nuclear localization signal 2 (NLS) element.

It belongs to the histone H1/H5 family. Phosphorylated by CDK, this phosphorylation prevents DNA-binding. Motility is increased when hypophosphorylated. Post-translationally, acetylated.

It localises to the nucleus. It is found in the nucleolus. In terms of biological role, binds A/T-rich DNA (e.g. present in the storage gamma-zein gene promoter) with a highly dynamic distribution into the nucleus. Probably involved in endosperm development, during cells shift from a mitotic cycle to endoreduplication leading to massive synthesis of storage proteins (zeins) and starch. The polypeptide is HMG-Y-related protein A (Zea mays (Maize)).